The sequence spans 431 residues: Serine/threonine-protein kinase Sgk1 (431 aa).

Residues Met1–Ile60 are necessary for localization to the mitochondria. Positions Pro66–His92 are disordered. A Phosphoserine modification is found at Ser74. Residue Ser78 is modified to Phosphoserine; by MAPK7. The segment covering Gln81–Pro91 has biased composition (polar residues). The Protein kinase domain maps to Phe98–Phe355. ATP contacts are provided by residues Ile104–Val112 and Lys127. Residues Lys131–Lys141 carry the Nuclear localization signal motif. The active-site Proton acceptor is the Asp222. Thr256 is subject to Phosphothreonine; by PDPK1. An AGC-kinase C-terminal domain is found at Ser356–Leu431. A Phosphothreonine; by PKA modification is found at Thr369. A phosphoserine mark is found at Ser397, Ser401, and Ser422.

This sequence belongs to the protein kinase superfamily. AGC Ser/Thr protein kinase family. In terms of assembly, homodimer; disulfide-linked. Forms a trimeric complex with FBXW7 and NOTCH1. Interacts with MAPK3/ERK1, MAPK1/ERK2, MAP2K1/MEK1, MAP2K2/MEK2, NEDD4, NEDD4L, MAPT/TAU, MAPK7, CREB1, SLC9A3R2/NHERF2 and KCNJ1/ROMK1. Associates with the mammalian target of rapamycin complex 2 (mTORC2) via an interaction with MAPKAP1/SIN1. In terms of processing, regulated by phosphorylation. Activated by phosphorylation on Ser-422 by mTORC2, transforming it into a substrate for PDPK1 which phosphorylates it on Thr-256. Phosphorylation on Ser-397 and Ser-401 are also essential for its activity. Phosphorylation on Ser-78 by MAPK7 is required for growth factor-induced cell cycle progression. Ubiquitinated by NEDD4L; which promotes proteasomal degradation. Ubiquitinated by SYVN1 at the endoplasmic reticulum; which promotes rapid proteasomal degradation and maintains a high turnover rate in resting cells.

It is found in the cytoplasm. The protein localises to the nucleus. The protein resides in the endoplasmic reticulum membrane. Its subcellular location is the cell membrane. It localises to the mitochondrion. The enzyme catalyses L-seryl-[protein] + ATP = O-phospho-L-seryl-[protein] + ADP + H(+). The catalysed reaction is L-threonyl-[protein] + ATP = O-phospho-L-threonyl-[protein] + ADP + H(+). Two specific sites, one in the kinase domain (Thr-256) and the other in the C-terminal regulatory region (Ser-422), need to be phosphorylated for its full activation. Phosphorylation at Ser-397 and Ser-401 are also essential for its activity. Activated by WNK1, WNK2, WNK3 and WNK4; which promote phosphorylation by mTORC2. Its function is as follows. Serine/threonine-protein kinase which is involved in the regulation of a wide variety of ion channels, membrane transporters, cellular enzymes, transcription factors, neuronal excitability, cell growth, proliferation, survival, migration and apoptosis. Plays an important role in cellular stress response. Contributes to regulation of renal Na(+) retention, renal K(+) elimination, salt appetite, gastric acid secretion, intestinal Na(+)/H(+) exchange and nutrient transport, insulin-dependent salt sensitivity of blood pressure, salt sensitivity of peripheral glucose uptake, cardiac repolarization and memory consolidation. Up-regulates Na(+) channels: SCNN1A/ENAC, SCN5A and ASIC1/ACCN2, K(+) channels: KCNJ1/ROMK1, KCNA1-5, KCNQ1-5 and KCNE1, epithelial Ca(2+) channels: TRPV5 and TRPV6, chloride channels: BSND, CLCN2 and CFTR, glutamate transporters: SLC1A3/EAAT1, SLC1A2 /EAAT2, SLC1A1/EAAT3, SLC1A6/EAAT4 and SLC1A7/EAAT5, amino acid transporters: SLC1A5/ASCT2, SLC38A1/SN1 and SLC6A19, creatine transporter: SLC6A8, Na(+)/dicarboxylate cotransporter: SLC13A2/NADC1, Na(+)-dependent phosphate cotransporter: SLC34A2/NAPI-2B, glutamate receptor: GRIK2/GLUR6. Up-regulates carriers: SLC9A3/NHE3, SLC12A1/NKCC2, SLC12A3/NCC, SLC5A3/SMIT, SLC2A1/GLUT1, SLC5A1/SGLT1 and SLC15A2/PEPT2. Regulates enzymes: GSK3A/B, PMM2 and Na(+)/K(+) ATPase, and transcription factors: CTNNB1 and nuclear factor NF-kappa-B. Stimulates sodium transport into epithelial cells by enhancing the stability and expression of SCNN1A/ENAC. This is achieved by phosphorylating the NEDD4L ubiquitin E3 ligase, promoting its interaction with 14-3-3 proteins, thereby preventing it from binding to SCNN1A/ENAC and targeting it for degradation. Regulates store-operated Ca(+2) entry (SOCE) by stimulating ORAI1 and STIM1. Regulates KCNJ1/ROMK1 directly via its phosphorylation or indirectly via increased interaction with SLC9A3R2/NHERF2. Phosphorylates MDM2 and activates MDM2-dependent ubiquitination of p53/TP53. Phosphorylates MAPT/TAU and mediates microtubule depolymerization and neurite formation in hippocampal neurons. Phosphorylates SLC2A4/GLUT4 and up-regulates its activity. Phosphorylates APBB1/FE65 and promotes its localization to the nucleus. Phosphorylates MAPK1/ERK2 and activates it by enhancing its interaction with MAP2K1/MEK1 and MAP2K2/MEK2. Phosphorylates FBXW7 and plays an inhibitory role in the NOTCH1 signaling. Phosphorylates FOXO1 resulting in its relocalization from the nucleus to the cytoplasm. Phosphorylates FOXO3, promoting its exit from the nucleus and interference with FOXO3-dependent transcription. Phosphorylates BRAF and MAP3K3/MEKK3 and inhibits their activity. Phosphorylates SLC9A3/NHE3 in response to dexamethasone, resulting in its activation and increased localization at the cell membrane. Phosphorylates CREB1. Necessary for vascular remodeling during angiogenesis. The chain is Serine/threonine-protein kinase Sgk1 (SGK1) from Macaca fascicularis (Crab-eating macaque).